The primary structure comprises 255 residues: Octanoyltransferase (255 aa).

Residues Gly-54–Val-238 enclose the BPL/LPL catalytic domain. Substrate contacts are provided by residues Arg-92 to His-99, Ala-167 to Gly-169, and Gly-180 to Ala-182. The active-site Acyl-thioester intermediate is the Cys-198.

This sequence belongs to the LipB family.

The protein resides in the cytoplasm. The catalysed reaction is octanoyl-[ACP] + L-lysyl-[protein] = N(6)-octanoyl-L-lysyl-[protein] + holo-[ACP] + H(+). The protein operates within protein modification; protein lipoylation via endogenous pathway; protein N(6)-(lipoyl)lysine from octanoyl-[acyl-carrier-protein]: step 1/2. Catalyzes the transfer of endogenously produced octanoic acid from octanoyl-acyl-carrier-protein onto the lipoyl domains of lipoate-dependent enzymes. Lipoyl-ACP can also act as a substrate although octanoyl-ACP is likely to be the physiological substrate. The sequence is that of Octanoyltransferase from Rhodopseudomonas palustris (strain BisB5).